The following is a 134-amino-acid chain: MLFYVVITLVAGTVSGLNVRCNNPHTANCENGAKLESYFREGETCVGSPACPGEGYATKEDCQKACFPGGGDHSTNVDSSCFGQPPTSCETGAEVTYYDSGSRTCKVLQHGCPSSENAFDSEIECQVACGVSME.

The first 16 residues, 1–16, serve as a signal peptide directing secretion; the sequence is MLFYVVITLVAGTVSG. Residues 17 to 69 form the BPTI/Kunitz inhibitor 1 domain; that stretch reads LNVRCNNPHTANCENGAKLESYFREGETCVGSPACPGEGYATKEDCQKACFPG. 6 disulfides stabilise this stretch: Cys21/Cys66, Cys29/Cys51, Cys45/Cys62, Cys81/Cys129, Cys89/Cys112, and Cys105/Cys125. Residues 70 to 82 are linker; sequence GGDHSTNVDSSCF. Positions 83 to 129 constitute a BPTI/Kunitz inhibitor domain; that stretch reads GQPPTSCETGAEVTYYDSGSRTCKVLQHGCPSSENAFDSEIECQVAC.

As to expression, expressed in salivary glands.

Its subcellular location is the cytoplasmic vesicle. The protein resides in the secretory vesicle. It localises to the secreted. Its function is as follows. Tick salivary thrombin inhibitor that plays an important part in the anti-hemostatic strategy of ticks. Inhibits thrombin-induced platelet aggregation, but has no effect on ADP- or collagen-induced aggregation. Is a competitive, slow-, tight-binding inhibitor of thrombin (Ki=4.89 pM). It requires thrombin fibrinogen-binding exosite for optimal inhibition, as its affinity for thrombin lacking the exosite is much lower (Ki=22.3 nM). Its N-terminal amino acid residues may bind inside the active site cleft of thrombin, while its C-terminal domain may interact with the basic fibrinogen recognition exosite of thrombin. It does not inhibit plasmin, factor Xa (F10), and trypsin. This Ornithodoros kalahariensis (Tick) protein is Thrombin inhibitor savignin.